The following is a 198-amino-acid chain: ATP-dependent Clp protease proteolytic subunit 1 (198 aa).

Serine 98 serves as the catalytic Nucleophile. Residue histidine 123 is part of the active site.

This sequence belongs to the peptidase S14 family. Fourteen ClpP subunits assemble into 2 heptameric rings which stack back to back to give a disk-like structure with a central cavity, resembling the structure of eukaryotic proteasomes.

The protein resides in the cytoplasm. It carries out the reaction Hydrolysis of proteins to small peptides in the presence of ATP and magnesium. alpha-casein is the usual test substrate. In the absence of ATP, only oligopeptides shorter than five residues are hydrolyzed (such as succinyl-Leu-Tyr-|-NHMec, and Leu-Tyr-Leu-|-Tyr-Trp, in which cleavage of the -Tyr-|-Leu- and -Tyr-|-Trp bonds also occurs).. In terms of biological role, cleaves peptides in various proteins in a process that requires ATP hydrolysis. Has a chymotrypsin-like activity. Plays a major role in the degradation of misfolded proteins. ClpXP1 is involved in the complete degradation of the Site-2 clipped anti-sigma-W factor RsiW. This results in the release of SigW and the transcription activation of the genes under the control of the sigma-W factor. The protein is ATP-dependent Clp protease proteolytic subunit 1 of Bacillus licheniformis (strain ATCC 14580 / DSM 13 / JCM 2505 / CCUG 7422 / NBRC 12200 / NCIMB 9375 / NCTC 10341 / NRRL NRS-1264 / Gibson 46).